A 333-amino-acid polypeptide reads, in one-letter code: Taste receptor type 2 member 38 (333 aa).

Residues 1–17 lie on the Extracellular side of the membrane; it reads MLTLTRIRTVSYEVRST. A helical membrane pass occupies residues 18–38; sequence FLFISVLEFAVGFLTNAFVFL. The Cytoplasmic portion of the chain corresponds to 39 to 55; sequence VNFWDVVKRQPLSNSDC. A helical transmembrane segment spans residues 56–76; sequence VLLCLSISRLFLHGLLFLSAI. The Extracellular portion of the chain corresponds to 77–94; the sequence is QLTHFQKLSEPLNHSYQA. Residues 95–115 traverse the membrane as a helical segment; that stretch reads IIMLWMIANQANLWLAACLSL. Topologically, residues 116–142 are cytoplasmic; sequence LYCSKLIRFSHTFLICLASWVSRKISQ. Residues 143 to 163 traverse the membrane as a helical segment; sequence MLLGIILCSCICTVLCVWCFF. Residues 164–190 lie on the Extracellular side of the membrane; sequence SRPHFTVTTVLFMNNNTRLNWQIKDLN. An N-linked (GlcNAc...) asparagine glycan is attached at Asn-178. A helical membrane pass occupies residues 191–211; the sequence is LFYSFLFCYLWSVPPFLLFLV. The Cytoplasmic segment spans residues 212 to 251; the sequence is SSGMLTVSLGRHMRTMKVYIRDSRDPSLEAHIKALKSLVS. The chain crosses the membrane as a helical span at residues 252 to 272; it reads FFCFFVISSCAAFISVPLLIL. Residues 273-276 lie on the Extracellular side of the membrane; it reads WRDK. A helical membrane pass occupies residues 277–297; that stretch reads IGVMVCVGIMAACPSGHAAVL. Residues 298 to 333 lie on the Cytoplasmic side of the membrane; sequence ISGNAKLRRAVTTILLWAQSSLKVRADHKADSRTPC.

It belongs to the G-protein coupled receptor T2R family.

It is found in the membrane. Receptor that may play a role in the perception of bitterness and is gustducin-linked. May play a role in sensing the chemical composition of the gastrointestinal content. The activity of this receptor may stimulate alpha gustducin, mediate PLC-beta-2 activation and lead to the gating of TRPM5. In Gorilla gorilla gorilla (Western lowland gorilla), this protein is Taste receptor type 2 member 38 (TAS2R38).